The chain runs to 357 residues: Cholinesterase 1 (357 aa).

The Acyl-ester intermediate role is filled by Ser112. Residues Cys166 and Cys179 are joined by a disulfide bond. Active-site charge relay system residues include Glu244 and His357.

This sequence belongs to the type-B carboxylesterase/lipase family.

It catalyses the reaction an acylcholine + H2O = a carboxylate + choline + H(+). The sequence is that of Cholinesterase 1 (CHE1) from Branchiostoma lanceolatum (Common lancelet).